Here is a 217-residue protein sequence, read N- to C-terminus: MSDPIWKSRIIPAEQALPGRADALSPTTSHAITGREIKADTPEGMQEIFLGLGCFWGAERLFWETDGVWHTAVGYGGGTTPNPTYQETCSGATGHAELVRVVFDPEMLSLDQVLKIFWEGHDPTQGMRQGNDRGTQYRSAIYATTPEQLVAAHDAAARYQAELDGAGLGTITTEIVKAGPFYYAEDEHQQYLARNPSGYCGIGGTGVVCPIGRHAPT.

Cys-54 is an active-site residue.

It belongs to the MsrA Met sulfoxide reductase family.

It catalyses the reaction L-methionyl-[protein] + [thioredoxin]-disulfide + H2O = L-methionyl-(S)-S-oxide-[protein] + [thioredoxin]-dithiol. It carries out the reaction [thioredoxin]-disulfide + L-methionine + H2O = L-methionine (S)-S-oxide + [thioredoxin]-dithiol. Functionally, has an important function as a repair enzyme for proteins that have been inactivated by oxidation. Catalyzes the reversible oxidation-reduction of methionine sulfoxide in proteins to methionine. This chain is Peptide methionine sulfoxide reductase MsrA, found in Maricaulis maris (strain MCS10) (Caulobacter maris).